Reading from the N-terminus, the 298-residue chain is MEQDLARIEQFLDALWLERNLAENTLSAYRRDLSMVVAWLHHRGKTLATAQADDLQTLLAERVEGGYKATSSARLLSAMRRFFQHLYREKYREDDPSAQLASPKLPQRLPKDLSEAQVERLLQAPLIDQPLELRDKAMLEVLYATGLRVSELVGLTMSDISLRQGVVRVIGKGNKERLVPLGEEAVYWLETYLEHGRPWLLNGVSIDVLFPSQRAQQMTRQTFWHRIKHYAVLAGIDSEKLSPHVLRHAFATHLLNHGADLRVVQMLLGHSDLSTTQIYTHVATERLRQLHQQHHPRA.

Positions 2 to 87 (EQDLARIEQF…AMRRFFQHLY (86 aa)) constitute a Core-binding (CB) domain. One can recognise a Tyr recombinase domain in the interval 108–292 (RLPKDLSEAQ…ATERLRQLHQ (185 aa)). Catalysis depends on residues Arg148, Lys172, His244, Arg247, and His270. Tyr279 serves as the catalytic O-(3'-phospho-DNA)-tyrosine intermediate.

Belongs to the 'phage' integrase family. XerD subfamily. In terms of assembly, forms a cyclic heterotetrameric complex composed of two molecules of XerC and two molecules of XerD, in which XerC interacts with XerD via its C-terminal region, XerD interacts with XerC via its C-terminal region and so on.

It localises to the cytoplasm. With respect to regulation, ftsK may regulate the catalytic switch between XerC and XerD in the heterotetrameric complex during the two steps of the recombination process. Site-specific tyrosine recombinase, which acts by catalyzing the cutting and rejoining of the recombining DNA molecules. Binds cooperatively to specific DNA consensus sequences that are separated from XerC binding sites by a short central region, forming the heterotetrameric XerC-XerD complex that recombines DNA substrates. The complex is essential to convert dimers of the bacterial chromosome into monomers to permit their segregation at cell division. It also contributes to the segregational stability of plasmids. In the complex XerD specifically exchanges the bottom DNA strands. The protein is Tyrosine recombinase XerD (xerD) of Salmonella typhi.